The sequence spans 244 residues: Ribonuclease 3 (244 aa).

Positions 17–146 constitute an RNase III domain; the sequence is FEKKMQELNL…FVGALYLDQG (130 aa). Position 59 (Glu-59) interacts with Mg(2+). The active site involves Asp-63. Residues Asp-132 and Glu-135 each coordinate Mg(2+). Residue Glu-135 is part of the active site. The DRBM domain maps to 172 to 241; that stretch reads DFKTQFQEYV…AERAYKILKN (70 aa).

This sequence belongs to the ribonuclease III family. In terms of assembly, homodimer. It depends on Mg(2+) as a cofactor.

The protein resides in the cytoplasm. The catalysed reaction is Endonucleolytic cleavage to 5'-phosphomonoester.. Digests double-stranded RNA. Involved in the processing of primary rRNA transcript to yield the immediate precursors to the large and small rRNAs (23S and 16S). Processes some mRNAs, and tRNAs when they are encoded in the rRNA operon. Processes pre-crRNA and tracrRNA of type II CRISPR loci if present in the organism. In Staphylococcus saprophyticus subsp. saprophyticus (strain ATCC 15305 / DSM 20229 / NCIMB 8711 / NCTC 7292 / S-41), this protein is Ribonuclease 3.